The following is a 2079-amino-acid chain: Protein xmas (2079 aa).

The RRM domain occupies 12–83; sequence KTLLCRNIPE…HLFDISYADN (72 aa). The interval 112–152 is disordered; the sequence is NEYGSGKPIKKPQNGSSGSGGSSMLPAIPVGPATAPVSRDR. A PCI domain is found at 342-525; that stretch reads DSKINAENLT…ETEYKLPRQY (184 aa). The interval 835–1359 is sufficient for Orc3 binding; it reads PLSFGAENPE…RRDASDHKHA (525 aa). 4 disordered regions span residues 1335–1360, 1755–1778, 1930–1963, and 2032–2079; these read RHTL…KHAM, AEET…SKRA, KAQA…TSKA, and SAAA…TGKL. The span at 1764-1776 shows a compositional bias: basic residues; it reads HHRHHGGGQKMSK. Residues 2048-2059 show a composition bias toward low complexity; it reads PVVSPKVQVPSV. The segment covering 2070–2079 has biased composition (polar residues); the sequence is GPQTTKTGKL.

It belongs to the SAC3 family. Component of the nuclear pore complex (NPC)-associated TREX-2/AMEX complex (anchoring and mRNA export complex), composed of e(y)2, xmas and PCID2. Within the TREX-2/ AMEX complex, interactions with e(y)2 is required for localization of e(y)2 to the nuclear periphery. Interaction between the TREX-2/AMEX complex and the ORC complex is required for ORC localization to mRNPs, and consequently mRNA export. Within the TREX-2/AMEX-ORC complex, interacts with Orc6, (via C-terminus) with Orc3, and weakly interacts with Orc4. However, another report found that the interaction with Orc3 is not direct, instead it is mediated via e(y)2. Interacts with piwi. In terms of tissue distribution, expressed in ovaries (at protein level). Detected in the testes and ovaries, with expression levels higher in oocytes than in testicular cells (at protein level). As to expression, detected in the testes and ovaries (at protein level). In terms of tissue distribution, detected in the testes.

It localises to the nucleus. It is found in the nucleoplasm. The protein resides in the nucleus membrane. Its subcellular location is the cytoplasm. Involved in mRNA export and mRNA coupled transcription activation. Component of the nuclear pore complex (NPC)-associated TREX-2/AMEX complex (anchoring and mRNA export complex) which functions in docking export-competent ribonucleoprotein particles (mRNPs) to the nuclear entrance of the nuclear pore complex (nuclear basket), thereby enabling the export of mRNAs to the cytoplasm through the nuclear pores. The TREX-2/AMEX complex also functions with the transcriptional coactivator SAGA/TFTC complex, to anchor a subset of transcription sites to the nuclear pore complex basket in order to achieve efficient transcription and export of their resulting mRNAs. Within the complex, required for localization of e(y)2 to the nuclear periphery. The chain is Protein xmas from Drosophila melanogaster (Fruit fly).